The following is a 456-amino-acid chain: MDSIKGTDEKYLTVSELNWYVKQKFDRDPYLRQIFLQGELSNFRFRRGGHQYFSLKDDKSKINVVMFRGDFDKVKFEPEEGMKVYVTGRLSTYEAQGSYQFYAKSMEPSGLGALYERFRQLQEKLAKEGLFAQEHKRPLPLFPDKIAVVTSASGAVIHDIMVTANRRFPHAEIDLFPAQVQGESAAGSLVSAMQQIQARADEYDVLIIGRGGGSLEDLWPFNEEEVVRQVYAMKMPVISSVGHETDTTLCDLAADCRAATPTAAAEMATPALPLVLAEIGQLQTRLLTDIRAVIQVRAQALAQLENSFIMKEPQRLYEQKMQQVDQLSQQLSRMMEVIVKDQGQKLSLLTQRLQHQAPDRRIKQLKQENSYLAKSLEMGIKRILEQKQAACRQAVQQLDDYSPLKTLARGYSYTTDASGNVVKSVQQLVPGDQVRLHLKDGQAIGRIEEIKEEKND.

It belongs to the XseA family. As to quaternary structure, heterooligomer composed of large and small subunits.

It localises to the cytoplasm. It carries out the reaction Exonucleolytic cleavage in either 5'- to 3'- or 3'- to 5'-direction to yield nucleoside 5'-phosphates.. Functionally, bidirectionally degrades single-stranded DNA into large acid-insoluble oligonucleotides, which are then degraded further into small acid-soluble oligonucleotides. The chain is Exodeoxyribonuclease 7 large subunit from Lactobacillus delbrueckii subsp. bulgaricus (strain ATCC BAA-365 / Lb-18).